Consider the following 431-residue polypeptide: MLCTVLLALAVLLAVAVTGAVLFLNHTHTPGTAPPPVVSTGAAGANSALVTVERADSSRLSILIDPRCPDLADSFARLESAQASVLEALTEHQAQPRLVGDQEQELLDTLADQLPRLLTRASELQTECMGLRKGHGTLGQGLSALQSEQGRLIQLLSESQGHMAHLVNSVGDVLDALQRDRGLGRPRAKADLQRAPARGARPRGCATGSRPRDCLDVLLSGQQDDGIYSVFPTHYPAGFQVYCDMRTDGGGWTVFQRREDGSVNFFRGWDAYRDGFGRLTGEHWLGLKRIHALTTQTAYELHVDLEDFDNGTAYARYGSFGVGLFSVDPEEDGYPLTVADYSGTAGDSLLKHSGMRFTTKDRDSDHSENNCAAFYRGAWWYRNCHTSNLNGQYLRGAHTSYADGVEWSSWTGWQYSLKFSEMKIRPVREDR.

Residues 1–3 lie on the Cytoplasmic side of the membrane; sequence MLC. The chain crosses the membrane as a helical; Signal-anchor for type II membrane protein span at residues 4–24; sequence TVLLALAVLLAVAVTGAVLFL. At 25–431 the chain is on the extracellular side; that stretch reads NHTHTPGTAP…MKIRPVREDR (407 aa). One can recognise a Fibrinogen C-terminal domain in the interval 205–428; sequence CATGSRPRDC…FSEMKIRPVR (224 aa). An intrachain disulfide couples cysteine 214 to cysteine 243. An N-linked (GlcNAc...) asparagine glycan is attached at asparagine 310. Residues aspartate 363 and aspartate 365 each contribute to the Ca(2+) site. Cysteine 371 and cysteine 384 are oxidised to a cystine.

Homotetramer; disulfide-linked.

It is found in the membrane. In terms of biological role, acetyl group-binding receptor which shows a high-affinity and calcium-dependent binding to acetylated structures such as chitin, some N-acetylated carbohydrates, and amino acids, but not to their non-acetylated counterparts. Can facilitate the endocytosis of acetylated components. The polypeptide is Fibrinogen C domain-containing protein 1 (FIBCD1) (Macaca fascicularis (Crab-eating macaque)).